A 76-amino-acid polypeptide reads, in one-letter code: Translational regulator CsrA (76 aa).

It belongs to the CsrA/RsmA family. As to quaternary structure, homodimer; the beta-strands of each monomer intercalate to form a hydrophobic core, while the alpha-helices form wings that extend away from the core.

It is found in the cytoplasm. Functionally, a translational regulator that binds mRNA to regulate translation initiation and/or mRNA stability. Usually binds in the 5'-UTR at or near the Shine-Dalgarno sequence preventing ribosome-binding, thus repressing translation. Its main target seems to be the major flagellin gene, while its function is anatagonized by FliW. This Syntrophomonas wolfei subsp. wolfei (strain DSM 2245B / Goettingen) protein is Translational regulator CsrA.